A 160-amino-acid chain; its full sequence is D-aminoacyl-tRNA deacylase 2 (160 aa).

Positions 152–153 (GP) match the Gly-transPro motif, allows the protein to recognize chirality of D-amino acids motif.

Belongs to the DTD family. Homodimer.

Its subcellular location is the cytoplasm. The catalysed reaction is a D-aminoacyl-tRNA + H2O = a tRNA + a D-alpha-amino acid + H(+). It catalyses the reaction glycyl-tRNA(Ala) + H2O = tRNA(Ala) + glycine + H(+). It carries out the reaction D-tyrosyl-tRNA(Tyr) + H2O = D-tyrosine + tRNA(Tyr). The enzyme catalyses L-alanyl-tRNA(Thr) + H2O = tRNA(Thr) + L-alanine + H(+). In terms of biological role, deacylates mischarged D-aminoacyl-tRNAs. Also deacylates mischarged glycyl-tRNA(Ala), protecting cells against glycine mischarging by AlaRS. Probably acts by rejecting L-amino acids from its binding site rather than specific recognition of D-amino acids. Catalyzes the hydrolysis of D-tyrosyl-tRNA(Tyr), has no activity on correctly charged L-tyrosyl-tRNA(Tyr). By recycling D-aminoacyl-tRNA to D-amino acids and free tRNA molecules, this enzyme counteracts the toxicity associated with the formation of D-aminoacyl-tRNA entities in vivo and helps enforce protein L-homochirality. In contrast to DTD1, deacylates L-Ala mischarged on tRNA(Thr)(G4.U69) by alanine-tRNA ligase AARS. Can deacylate L-Ala due to a relaxed specificity for substrate chirality caused by the trans conformation of the Gly-Pro motif in the active site. Also hydrolyzes correctly charged, achiral, glycyl-tRNA(Gly) in vitro, although in vivo eef1a1a/EF-Tu may protect cognate achiral glycyl-tRNA(Gly) from DTD2-mediated deacetylation. The sequence is that of D-aminoacyl-tRNA deacylase 2 (dtd2) from Danio rerio (Zebrafish).